Reading from the N-terminus, the 419-residue chain is Phosphoribosylamine--glycine ligase (419 aa).

The 203-residue stretch at 109-311 folds into the ATP-grasp domain; that stretch reads KQLLIEAGVP…LEKVLMACVE (203 aa). Position 135–191 (135–191) interacts with ATP; the sequence is ATKMGAPIVVKADGLAAGKGVIVAQTSAEATTAIAELFDQGFEKIVVEEFLPGEEVS. Mg(2+) is bound by residues Glu281 and Asn283.

This sequence belongs to the GARS family. It depends on Mg(2+) as a cofactor. Mn(2+) is required as a cofactor.

It carries out the reaction 5-phospho-beta-D-ribosylamine + glycine + ATP = N(1)-(5-phospho-beta-D-ribosyl)glycinamide + ADP + phosphate + H(+). It functions in the pathway purine metabolism; IMP biosynthesis via de novo pathway; N(1)-(5-phospho-D-ribosyl)glycinamide from 5-phospho-alpha-D-ribose 1-diphosphate: step 2/2. The protein is Phosphoribosylamine--glycine ligase of Synechocystis sp. (strain ATCC 27184 / PCC 6803 / Kazusa).